We begin with the raw amino-acid sequence, 183 residues long: Maltose O-acetyltransferase (183 aa).

Asn83 provides a ligand contact to acetyl-CoA. Residue His113 is the Proton donor/acceptor of the active site. Residues Gly140, Ser158, 163 to 164, Arg178, and Lys181 each bind acetyl-CoA; that span reads TK.

It belongs to the transferase hexapeptide repeat family. As to quaternary structure, homodimer.

The enzyme catalyses D-maltose + acetyl-CoA = 1-O-acetylmaltose + CoA. Its function is as follows. Catalyzes the CoA-dependent transfer of an acetyl group to maltose and other sugars. Acetylates glucose exclusively at the C6 position and maltose at the C6 position of the non-reducing end glucosyl moiety. Is able to acetylate maltooligosaccharides. The protein is Maltose O-acetyltransferase (maa) of Escherichia coli (strain K12).